The sequence spans 121 residues: Putative ankyrin repeat protein L215 (121 aa).

ANK repeat units follow at residues 10 to 40 (QYDSILMYAASNGYDKIVKLILDKVGTSFKE) and 42 to 71 (IHETILLWAFQNEHYETIQLLIDHGFNKLV).

This Acanthamoeba polyphaga mimivirus (APMV) protein is Putative ankyrin repeat protein L215.